The following is a 129-amino-acid chain: Glycine cleavage system H protein (129 aa).

A Lipoyl-binding domain is found at 24 to 106; the sequence is TYTVGITEHA…YAGGWIFKIK (83 aa). Lys65 bears the N6-lipoyllysine mark.

This sequence belongs to the GcvH family. As to quaternary structure, the glycine cleavage system is composed of four proteins: P, T, L and H. It depends on (R)-lipoate as a cofactor.

Its function is as follows. The glycine cleavage system catalyzes the degradation of glycine. The H protein shuttles the methylamine group of glycine from the P protein to the T protein. The chain is Glycine cleavage system H protein from Escherichia coli O45:K1 (strain S88 / ExPEC).